The chain runs to 385 residues: S-adenosylmethionine synthase (385 aa).

H16 contributes to the ATP binding site. D18 contributes to the Mg(2+) binding site. Residue E44 participates in K(+) binding. The L-methionine site is built by E57 and Q100. The interval Q100–R110 is flexible loop. Residues D164–K166, K230–F231, D239, R245–K246, A262, and K266 contribute to the ATP site. D239 serves as a coordination point for L-methionine. K270 contributes to the L-methionine binding site.

The protein belongs to the AdoMet synthase family. Homotetramer; dimer of dimers. It depends on Mg(2+) as a cofactor. The cofactor is K(+).

The protein resides in the cytoplasm. It carries out the reaction L-methionine + ATP + H2O = S-adenosyl-L-methionine + phosphate + diphosphate. The protein operates within amino-acid biosynthesis; S-adenosyl-L-methionine biosynthesis; S-adenosyl-L-methionine from L-methionine: step 1/1. Its function is as follows. Catalyzes the formation of S-adenosylmethionine (AdoMet) from methionine and ATP. The overall synthetic reaction is composed of two sequential steps, AdoMet formation and the subsequent tripolyphosphate hydrolysis which occurs prior to release of AdoMet from the enzyme. This chain is S-adenosylmethionine synthase, found in Helicobacter acinonychis (strain Sheeba).